The following is a 377-amino-acid chain: Protein-tyrosine sulfotransferase 2 (377 aa).

The Cytoplasmic segment spans residues 1–8 (MRLSMRRA). A helical; Signal-anchor for type II membrane protein membrane pass occupies residues 9–25 (LLAAGLALALVLAVHLG). The Lumenal segment spans residues 26–377 (QRVLECQAVL…NSTSSHLGSS (352 aa)). 78 to 82 (RSGTT) lines the 3'-phosphoadenylyl sulfate pocket. The cysteines at positions 96 and 156 are disulfide-linked. Glu-99 acts as the Proton donor/acceptor in catalysis. The tract at residues 101–105 (RIIPR) is interaction with peptide substrate. Residues Arg-183, Ser-191, and Arg-195 each contribute to the 3'-phosphoadenylyl sulfate site. Cys-225 and Cys-233 are disulfide-bonded. Residues Tyr-238, 285–294 (STDQVIKPVN), and Lys-300 contribute to the 3'-phosphoadenylyl sulfate site. Asn-343 and Asn-368 each carry an N-linked (GlcNAc...) asparagine glycan.

This sequence belongs to the protein sulfotransferase family. In terms of assembly, homodimer. Can also form heterodimers with TPST1. In terms of processing, N-glycosylated.

It localises to the golgi apparatus membrane. It catalyses the reaction L-tyrosyl-[protein] + 3'-phosphoadenylyl sulfate = O-sulfo-L-tyrosine-[protein] + adenosine 3',5'-bisphosphate + H(+). In terms of biological role, catalyzes the O-sulfation of tyrosine residues within acidic motifs of polypeptides, using 3'-phosphoadenylyl sulfate (PAPS) as cosubstrate. The polypeptide is Protein-tyrosine sulfotransferase 2 (TPST2) (Bos taurus (Bovine)).